We begin with the raw amino-acid sequence, 259 residues long: Glucosamine-6-phosphate deaminase (259 aa).

The active-site Proton acceptor; for enolization step is the aspartate 66. Residue aspartate 135 is the For ring-opening step of the active site. Residue histidine 137 is the Proton acceptor; for ring-opening step of the active site. Glutamate 142 acts as the For ring-opening step in catalysis.

It belongs to the glucosamine/galactosamine-6-phosphate isomerase family. NagB subfamily.

The enzyme catalyses alpha-D-glucosamine 6-phosphate + H2O = beta-D-fructose 6-phosphate + NH4(+). It participates in amino-sugar metabolism; N-acetylneuraminate degradation; D-fructose 6-phosphate from N-acetylneuraminate: step 5/5. Functionally, catalyzes the reversible isomerization-deamination of glucosamine 6-phosphate (GlcN6P) to form fructose 6-phosphate (Fru6P) and ammonium ion. In Pseudarthrobacter chlorophenolicus (strain ATCC 700700 / DSM 12829 / CIP 107037 / JCM 12360 / KCTC 9906 / NCIMB 13794 / A6) (Arthrobacter chlorophenolicus), this protein is Glucosamine-6-phosphate deaminase.